A 309-amino-acid chain; its full sequence is Protein FdhE (309 aa).

Belongs to the FdhE family.

Its subcellular location is the cytoplasm. In terms of biological role, necessary for formate dehydrogenase activity. This is Protein FdhE from Escherichia coli O139:H28 (strain E24377A / ETEC).